A 333-amino-acid polypeptide reads, in one-letter code: Taste receptor type 2 member 123 (333 aa).

Over 1–13 (MFSQKINYSHLFT) the chain is Extracellular. N-linked (GlcNAc...) asparagine glycosylation occurs at Asn7. The helical transmembrane segment at 14–34 (FSITLYVEIVTGILGHGFIAL) threads the bilayer. The Cytoplasmic segment spans residues 35 to 60 (VNIMDWVKRRRISSVDQILTALALTR). A helical transmembrane segment spans residues 61–81 (FIYVLSMLICILLFMLCPHLP). Residues 82–90 (RRSEMLSAM) are Extracellular-facing. Residues 91 to 111 (GIFWVVNSHFSIWLTTCLGVF) form a helical membrane-spanning segment. The Cytoplasmic segment spans residues 112 to 134 (YFLKIANFSNSFFLYLKWRVKKV). A helical transmembrane segment spans residues 135 to 155 (ILIIILASLIFLTLHILSLGI). At 156–205 (YDQFSIAAYVGNMSYSLTDLTQFSSTFLFSNSSNVFLITNSSHVFLPINS) the chain is on the extracellular side. N-linked (GlcNAc...) asparagine glycosylation is found at Asn167, Asn186, and Asn195. The chain crosses the membrane as a helical span at residues 206-226 (LFMLIPFTVSLVAFLMLIFSL). Topologically, residues 227–253 (WKHHKKMQVNAKQPRDVSTMAHIKALQ) are cytoplasmic. The chain crosses the membrane as a helical span at residues 254-274 (TVFSFLLLYAIYLLFLIIGIL). Residues 275 to 281 (NLGLMEK) are Extracellular-facing. The helical transmembrane segment at 282 to 302 (IVILIFDHISGAVFPISHSFV) threads the bilayer. The Cytoplasmic portion of the chain corresponds to 303-333 (LILGNSKLRQASLSVLPCLRCQSKDMDTMGL).

The protein belongs to the G-protein coupled receptor T2R family. As to expression, expressed in subsets of taste receptor cells of the tongue and palate epithelium and exclusively in gustducin-positive cells. Expressed in the duodenum, antrum and fundus (part of the stomach).

It is found in the membrane. Gustducin-coupled receptor implicated in the perception of bitter compounds in the oral cavity and the gastrointestinal tract. Signals through PLCB2 and the calcium-regulated cation channel TRPM5. In Mus musculus (Mouse), this protein is Taste receptor type 2 member 123 (Tas2r123).